The following is a 210-amino-acid chain: Thymidylate kinase (210 aa).

Residue 10–17 participates in ATP binding; the sequence is GPEGAGKS.

This sequence belongs to the thymidylate kinase family.

The enzyme catalyses dTMP + ATP = dTDP + ADP. Phosphorylation of dTMP to form dTDP in both de novo and salvage pathways of dTTP synthesis. The protein is Thymidylate kinase of Pseudomonas fluorescens (strain ATCC BAA-477 / NRRL B-23932 / Pf-5).